The following is a 456-amino-acid chain: 26S proteasome non-ATPase regulatory subunit 12 (456 aa).

An N-acetylalanine modification is found at A2. K92 is covalently cross-linked (Glycyl lysine isopeptide (Lys-Gly) (interchain with G-Cter in SUMO1); alternate). Residue K92 forms a Glycyl lysine isopeptide (Lys-Gly) (interchain with G-Cter in SUMO2); alternate linkage. N6-acetyllysine is present on residues K221 and K368. The PCI domain maps to 242–420 (SICKHYRAIY…GIINFQRPKD (179 aa)).

This sequence belongs to the proteasome subunit p55 family. As to quaternary structure, component of the 19S proteasome regulatory particle complex. The 26S proteasome consists of a 20S core particle (CP) and two 19S regulatory subunits (RP). The regulatory particle is made of a lid composed of 9 subunits including PSMD12, a base containing 6 ATPases and few additional components. Interacts with ERCC6.

Its function is as follows. Component of the 26S proteasome, a multiprotein complex involved in the ATP-dependent degradation of ubiquitinated proteins. This complex plays a key role in the maintenance of protein homeostasis by removing misfolded or damaged proteins, which could impair cellular functions, and by removing proteins whose functions are no longer required. Therefore, the proteasome participates in numerous cellular processes, including cell cycle progression, apoptosis, or DNA damage repair. This Homo sapiens (Human) protein is 26S proteasome non-ATPase regulatory subunit 12 (PSMD12).